A 179-amino-acid chain; its full sequence is MIFYLHGFDATSPGNHEKMRQLQFIDPDVRLISYSTLHPKHDMQYLLKEVAKQMQHSDDPAPLMVGVGLGAYWAERIGFLNGLKSVLINPNLHPENTMQGKIDRPEEYADIANKCVSEFRMKNTHKAMCILSRFDEVLESQLSADELSRYYAIEWDETQPHKFPQLAAHLPKIKAFKLG.

The protein belongs to the UPF0227 family.

The sequence is that of UPF0227 protein SO_2251 from Shewanella oneidensis (strain ATCC 700550 / JCM 31522 / CIP 106686 / LMG 19005 / NCIMB 14063 / MR-1).